A 759-amino-acid polypeptide reads, in one-letter code: Phosphoribosylformylglycinamidine synthase subunit PurL (759 aa).

The active site involves H46. ATP contacts are provided by Y49 and K88. Residue E90 participates in Mg(2+) binding. Substrate is bound by residues 91–94 (SHNH) and R113. H92 functions as the Proton acceptor in the catalytic mechanism. Residue D114 coordinates Mg(2+). Substrate is bound at residue Q237. Residue D265 coordinates Mg(2+). Position 309–311 (309–311 (ESQ)) interacts with substrate. ATP-binding residues include D498 and G535. Residue N536 coordinates Mg(2+). Residue S538 participates in substrate binding.

The protein belongs to the FGAMS family. Monomer. Part of the FGAM synthase complex composed of 1 PurL, 1 PurQ and 2 PurS subunits.

Its subcellular location is the cytoplasm. The catalysed reaction is N(2)-formyl-N(1)-(5-phospho-beta-D-ribosyl)glycinamide + L-glutamine + ATP + H2O = 2-formamido-N(1)-(5-O-phospho-beta-D-ribosyl)acetamidine + L-glutamate + ADP + phosphate + H(+). It functions in the pathway purine metabolism; IMP biosynthesis via de novo pathway; 5-amino-1-(5-phospho-D-ribosyl)imidazole from N(2)-formyl-N(1)-(5-phospho-D-ribosyl)glycinamide: step 1/2. In terms of biological role, part of the phosphoribosylformylglycinamidine synthase complex involved in the purines biosynthetic pathway. Catalyzes the ATP-dependent conversion of formylglycinamide ribonucleotide (FGAR) and glutamine to yield formylglycinamidine ribonucleotide (FGAM) and glutamate. The FGAM synthase complex is composed of three subunits. PurQ produces an ammonia molecule by converting glutamine to glutamate. PurL transfers the ammonia molecule to FGAR to form FGAM in an ATP-dependent manner. PurS interacts with PurQ and PurL and is thought to assist in the transfer of the ammonia molecule from PurQ to PurL. This chain is Phosphoribosylformylglycinamidine synthase subunit PurL, found in Anaeromyxobacter dehalogenans (strain 2CP-C).